A 960-amino-acid chain; its full sequence is Chromosome transmission fidelity protein 18 (960 aa).

Disordered regions lie at residues 56 to 79 (DLFH…STLD) and 91 to 113 (DISE…YPNT). Residues 58 to 69 (FHSSQPVGSPTR) are compositionally biased toward polar residues. 423–430 (GLAGAGKT) contacts ATP.

Belongs to the activator 1 small subunits family. CTF18 subfamily. As to quaternary structure, component of the ctf18-RFC complex which consists of ctf18, ctf8, dcc1, rfc2, rfc3, rfc4 and rfc5.

Its subcellular location is the nucleus. Essential for the fidelity of chromosome transmission. Required for the DNA replication block checkpoint. Replication factor C (RFC) complex has an essential but redundant activity in sister chromatid cohesion establishment. Acts as a PCNA loader, loading PCNA onto primed templates. An RFC-like complex (ctf18-RFC) is formed where ctf18 replaces rfc1 in the RFC complex along with the association of dcc1 and ctf8. This complex is required for efficient establishment of chromosome cohesion during S-phase. The polypeptide is Chromosome transmission fidelity protein 18 (ctf18) (Schizosaccharomyces pombe (strain 972 / ATCC 24843) (Fission yeast)).